The chain runs to 144 residues: Large ribosomal subunit protein uL22 (144 aa).

Positions 124 to 137 (RLKKRVLGQNKRKQ) are enriched in basic residues. A disordered region spans residues 124–144 (RLKKRVLGQNKRKQSVSGEKK).

This sequence belongs to the universal ribosomal protein uL22 family. Part of the 50S ribosomal subunit.

Functionally, this protein binds specifically to 23S rRNA; its binding is stimulated by other ribosomal proteins, e.g. L4, L17, and L20. It is important during the early stages of 50S assembly. It makes multiple contacts with different domains of the 23S rRNA in the assembled 50S subunit and ribosome. In terms of biological role, the globular domain of the protein is located near the polypeptide exit tunnel on the outside of the subunit, while an extended beta-hairpin is found that lines the wall of the exit tunnel in the center of the 70S ribosome. This chain is Large ribosomal subunit protein uL22, found in Mycoplasmoides gallisepticum (strain R(low / passage 15 / clone 2)) (Mycoplasma gallisepticum).